Here is a 273-residue protein sequence, read N- to C-terminus: Manganese catalase (273 aa).

Glutamate 35 contributes to the Mn(2+) binding site. Ca(2+) contacts are provided by aspartate 57 and aspartate 61. Residues glutamate 66, histidine 69, glutamate 149, and histidine 182 each contribute to the Mn(2+) site. Ca(2+) is bound by residues asparagine 220, serine 222, and glycine 224. The interval 254–273 (EKPELKPAPPCVHNTLPGRE) is disordered.

This sequence belongs to the manganese catalase family. As to quaternary structure, homohexamer. Ca(2+) is required as a cofactor. Mn(2+) serves as cofactor.

The catalysed reaction is 2 H2O2 = O2 + 2 H2O. Inhibited in the presence of EDTA. Resistant to inhibition by sodium azide. In terms of biological role, catalyzes the decomposition of hydrogen peroxide into water and oxygen. No significant activity could be detected with any of the other tested substrates, including glutathione, pyrogallol, NADH, NADPH and o-dianisidine. This is Manganese catalase from Bacillus subtilis.